Reading from the N-terminus, the 239-residue chain is Phosphoribosylaminoimidazole-succinocarboxamide synthase (239 aa).

It belongs to the SAICAR synthetase family.

It catalyses the reaction 5-amino-1-(5-phospho-D-ribosyl)imidazole-4-carboxylate + L-aspartate + ATP = (2S)-2-[5-amino-1-(5-phospho-beta-D-ribosyl)imidazole-4-carboxamido]succinate + ADP + phosphate + 2 H(+). Its pathway is purine metabolism; IMP biosynthesis via de novo pathway; 5-amino-1-(5-phospho-D-ribosyl)imidazole-4-carboxamide from 5-amino-1-(5-phospho-D-ribosyl)imidazole-4-carboxylate: step 1/2. This chain is Phosphoribosylaminoimidazole-succinocarboxamide synthase, found in Bacillus cereus (strain G9842).